Consider the following 219-residue polypeptide: 7-cyano-7-deazaguanine synthase (219 aa).

10 to 20 provides a ligand contact to ATP; sequence FSGGQDSTTCL. Residues cysteine 186, cysteine 195, cysteine 198, and cysteine 201 each coordinate Zn(2+).

It belongs to the QueC family. Homodimer. It depends on Zn(2+) as a cofactor.

The enzyme catalyses 7-carboxy-7-deazaguanine + NH4(+) + ATP = 7-cyano-7-deazaguanine + ADP + phosphate + H2O + H(+). It functions in the pathway purine metabolism; 7-cyano-7-deazaguanine biosynthesis. In terms of biological role, catalyzes the ATP-dependent conversion of 7-carboxy-7-deazaguanine (CDG) to 7-cyano-7-deazaguanine (preQ(0)). This is 7-cyano-7-deazaguanine synthase from Bacillus velezensis (strain DSM 23117 / BGSC 10A6 / LMG 26770 / FZB42) (Bacillus amyloliquefaciens subsp. plantarum).